We begin with the raw amino-acid sequence, 412 residues long: L-cysteine:1D-myo-inositol 2-amino-2-deoxy-alpha-D-glucopyranoside ligase (412 aa).

Positions 1 to 30 (MQTWSSPSVPKLRGAPRPLRLHDTATGEVR) are disordered. Residue cysteine 43 coordinates Zn(2+). Residues 43 to 46 (CGIT), threonine 58, and 81 to 83 (NVT) each bind L-cysteinyl-5'-AMP. The 'HIGH' region motif lies at 45–55 (ITPYDATHLGH). Residues 187 to 192 (ERGGDP) carry the 'ERGGDP' region motif. Tryptophan 227 provides a ligand contact to L-cysteinyl-5'-AMP. Cysteine 231 serves as a coordination point for Zn(2+). L-cysteinyl-5'-AMP is bound at residue 249–251 (GSD). Residue histidine 256 coordinates Zn(2+). Isoleucine 283 contributes to the L-cysteinyl-5'-AMP binding site. The 'KMSKS' region motif lies at 289 to 293 (KMSKS).

It belongs to the class-I aminoacyl-tRNA synthetase family. MshC subfamily. Monomer. Requires Zn(2+) as cofactor.

It catalyses the reaction 1D-myo-inositol 2-amino-2-deoxy-alpha-D-glucopyranoside + L-cysteine + ATP = 1D-myo-inositol 2-(L-cysteinylamino)-2-deoxy-alpha-D-glucopyranoside + AMP + diphosphate + H(+). Catalyzes the ATP-dependent condensation of GlcN-Ins and L-cysteine to form L-Cys-GlcN-Ins. The polypeptide is L-cysteine:1D-myo-inositol 2-amino-2-deoxy-alpha-D-glucopyranoside ligase (Actinosynnema mirum (strain ATCC 29888 / DSM 43827 / JCM 3225 / NBRC 14064 / NCIMB 13271 / NRRL B-12336 / IMRU 3971 / 101)).